A 236-amino-acid polypeptide reads, in one-letter code: DNA repair protein RecO (236 aa).

This sequence belongs to the RecO family.

Its function is as follows. Involved in DNA repair and RecF pathway recombination. This Haemophilus influenzae (strain 86-028NP) protein is DNA repair protein RecO.